Consider the following 848-residue polypeptide: Protein sip5 (848 aa).

Residues 1–13 (MGQHQSRDDSHGG) are compositionally biased toward basic and acidic residues. 8 disordered regions span residues 1–67 (MGQH…KETA), 154–260 (IPAA…LPRD), 312–332 (DPHT…AEDT), 378–411 (AMSS…LSAN), 466–518 (RSRF…RDVE), 541–582 (EKEA…SSSM), 595–800 (GRRR…GLQM), and 813–848 (QLTL…EISQ). Residues 168–203 (PHSSNSTNAPSSNLQNLTVPIASRSQSASYDTSVGR) are compositionally biased toward polar residues. Composition is skewed to low complexity over residues 204–218 (SPSH…PTSP) and 239–250 (KSSSKEPSASDS). A compositionally biased stretch (low complexity) spans 378–393 (AMSSSSSITSPPITSP). A compositionally biased stretch (polar residues) spans 477 to 500 (DNSGSATPSNRDTSSRTAAESSGQ). 2 stretches are compositionally biased toward basic and acidic residues: residues 501–518 (ARRE…RDVE) and 541–569 (EKEA…ERKS). Polar residues-rich tracts occupy residues 571–582 (YGTNGHSASSSM) and 648–670 (LDPS…TSPD). Positions 679 to 691 (STASSASSSVAES) are enriched in low complexity. Over residues 692 to 713 (GNGTNPQGSSTSIESPGVTDTN) the composition is skewed to polar residues. Composition is skewed to basic and acidic residues over residues 736-764 (IEKE…RGSP) and 779-794 (LRPR…DHHV). Over residues 833-848 (QLGSNLQNLSNNEISQ) the composition is skewed to low complexity.

It belongs to the SIP5 family.

The protein resides in the cytoplasm. Its function is as follows. May negatively regulate the snf1 kinase. The protein is Protein sip5 (sip5) of Botryotinia fuckeliana (strain B05.10) (Noble rot fungus).